The chain runs to 209 residues: Large ribosomal subunit protein bL9 (209 aa).

Residues 181–209 (EASEEGQELAAQREATEDAGADESEETEA) form a disordered region. A compositionally biased stretch (acidic residues) spans 197–209 (EDAGADESEETEA).

This sequence belongs to the bacterial ribosomal protein bL9 family.

Its function is as follows. Binds to the 23S rRNA. This Maricaulis maris (strain MCS10) (Caulobacter maris) protein is Large ribosomal subunit protein bL9.